Here is a 288-residue protein sequence, read N- to C-terminus: Acetyl-coenzyme A carboxylase carboxyl transferase subunit beta (288 aa).

In terms of domain architecture, CoA carboxyltransferase N-terminal spans 24-288 (LWVKCPESGE…TRTPRASEAA (265 aa)).

It belongs to the AccD/PCCB family. In terms of assembly, acetyl-CoA carboxylase is a heterohexamer composed of biotin carboxyl carrier protein (AccB), biotin carboxylase (AccC) and two subunits each of ACCase subunit alpha (AccA) and ACCase subunit beta (AccD).

The protein resides in the cytoplasm. The catalysed reaction is N(6)-carboxybiotinyl-L-lysyl-[protein] + acetyl-CoA = N(6)-biotinyl-L-lysyl-[protein] + malonyl-CoA. Its pathway is lipid metabolism; malonyl-CoA biosynthesis; malonyl-CoA from acetyl-CoA: step 1/1. In terms of biological role, component of the acetyl coenzyme A carboxylase (ACC) complex. Biotin carboxylase (BC) catalyzes the carboxylation of biotin on its carrier protein (BCCP) and then the CO(2) group is transferred by the transcarboxylase to acetyl-CoA to form malonyl-CoA. This is Acetyl-coenzyme A carboxylase carboxyl transferase subunit beta from Methylocella silvestris (strain DSM 15510 / CIP 108128 / LMG 27833 / NCIMB 13906 / BL2).